A 170-amino-acid polypeptide reads, in one-letter code: Large ribosomal subunit protein uL10 (170 aa).

The protein belongs to the universal ribosomal protein uL10 family. In terms of assembly, part of the ribosomal stalk of the 50S ribosomal subunit. The N-terminus interacts with L11 and the large rRNA to form the base of the stalk. The C-terminus forms an elongated spine to which L12 dimers bind in a sequential fashion forming a multimeric L10(L12)X complex.

In terms of biological role, forms part of the ribosomal stalk, playing a central role in the interaction of the ribosome with GTP-bound translation factors. The sequence is that of Large ribosomal subunit protein uL10 from Corynebacterium urealyticum (strain ATCC 43042 / DSM 7109).